Here is a 1153-residue protein sequence, read N- to C-terminus: uncharacterized protein (1153 aa).

Disordered stretches follow at residues 164 to 193 (TTIK…QIDD), 224 to 245 (DNYD…DDDK), 294 to 316 (KSPQ…QSKH), 332 to 427 (EHKL…KNKK), 613 to 648 (LSML…EGEN), 683 to 703 (QQQQ…EEMS), 717 to 740 (KSDD…SKRK), 772 to 819 (NKKL…KTIE), 838 to 874 (ASSG…EDEK), and 942 to 1106 (NNNN…NNEV). Residues 169–179 (LPPPLPQPQPQ) show a composition bias toward pro residues. Composition is skewed to low complexity over residues 231-240 (NNNNNNNNSN), 298-312 (KLKL…QQQK), 336-391 (QQQQ…TPKK), and 399-423 (NNVN…NNNN). The span at 613 to 625 (LSMLDSTNDGSSQ) shows a compositional bias: polar residues. Residues 687–699 (QEKEKQQQEKQQD) show a composition bias toward basic and acidic residues. The segment covering 721 to 734 (NNNNNDNNNNNNNN) has biased composition (low complexity). The span at 772–784 (NKKLRVDSEDQQT) shows a compositional bias: basic and acidic residues. Composition is skewed to low complexity over residues 788–808 (TTTT…NNNN) and 839–854 (SSGG…QNDS). Residues 856–874 (TTKEKERSETIKTHNEDEK) show a composition bias toward basic and acidic residues. The span at 942-987 (NNNNNNNNNINNINNIGNKNTTVNNSNHSNHSNNNINNNNIFKNSN) shows a compositional bias: low complexity. Composition is skewed to polar residues over residues 988 to 998 (PIVDTNFSSTT) and 1005 to 1015 (QSKIFTGNQLP). Residues 1019-1059 (INNENVVNNNNNNEINNTTTTTTNNNSGIHKNNNNYNSDNS) show a composition bias toward low complexity. Positions 1064-1081 (DGLKQEKEEQKEEQKENK) are enriched in basic and acidic residues. Positions 1082 to 1105 (NNNNNNNNNNNNNNNNNNNNNNNE) are enriched in low complexity.

This is an uncharacterized protein from Dictyostelium discoideum (Social amoeba).